The sequence spans 76 residues: Tautomerase PptA (76 aa).

Proline 2 functions as the Proton acceptor; via imino nitrogen in the catalytic mechanism.

This sequence belongs to the 4-oxalocrotonate tautomerase family. PptA subfamily. As to quaternary structure, homodimer.

The protein resides in the cytoplasm. In Enterobacter sp. (strain 638), this protein is Tautomerase PptA.